The sequence spans 233 residues: Ribonuclease 3 (233 aa).

Residues 6–135 form the RNase III domain; that stretch reads QDYLAKEFNI…FIGALYLDQG (130 aa). Glu-48 is a binding site for Mg(2+). Residue Asp-52 is part of the active site. Positions 121 and 124 each coordinate Mg(2+). The active site involves Glu-124. The 70-residue stretch at 161–230 folds into the DRBM domain; sequence DAKTSLQEFL…AQQALDNMRN (70 aa). Positions 205 to 233 are disordered; that stretch reads IGEGKGSSKKHAEMQAAQQALDNMRNKNK.

It belongs to the ribonuclease III family. As to quaternary structure, homodimer. Mg(2+) is required as a cofactor.

Its subcellular location is the cytoplasm. The enzyme catalyses Endonucleolytic cleavage to 5'-phosphomonoester.. Digests double-stranded RNA. Involved in the processing of primary rRNA transcript to yield the immediate precursors to the large and small rRNAs (23S and 16S). Processes some mRNAs, and tRNAs when they are encoded in the rRNA operon. Processes pre-crRNA and tracrRNA of type II CRISPR loci if present in the organism. The polypeptide is Ribonuclease 3 (Limosilactobacillus reuteri (strain DSM 20016) (Lactobacillus reuteri)).